The primary structure comprises 279 residues: MNYIGAHVSSSGGLEKAVFRAFQIKATTFSFFTKNQRQWISLPLQKKNIEDFKKACIKYNFSPEKILPHSSYLINLGHPIDFFLEKSRVAFIDEIVRCDQLGLRFLNFHPGSHLNKISEVTCLSRISESINIALEKTKNVVAVIENTAGQGTNIGYRFEHLYEIIKKIDDKSRIGVCIDTCHLFASGYDLRTKIDYESTFNKFFDLIEMKYLKGFHLNDSKKQFNSRVDRHENLGLGEIGKSVFKWIIKNKNFHNIPMILETINPKLWEKEIDWLRSLQ.

Residues His69, His109, Glu145, Asp179, His182, His216, Asp229, His231, and Glu261 each contribute to the Zn(2+) site.

The protein belongs to the AP endonuclease 2 family. It depends on Zn(2+) as a cofactor.

The catalysed reaction is Endonucleolytic cleavage to 5'-phosphooligonucleotide end-products.. In terms of biological role, endonuclease IV plays a role in DNA repair. It cleaves phosphodiester bonds at apurinic or apyrimidinic (AP) sites, generating a 3'-hydroxyl group and a 5'-terminal sugar phosphate. In Buchnera aphidicola subsp. Schizaphis graminum (strain Sg), this protein is Probable endonuclease 4.